The primary structure comprises 661 residues: Transketolase (661 aa).

An N-acetylserine modification is found at serine 2. Histidine 31 lines the substrate pocket. Residues histidine 71 and 119–121 each bind thiamine diphosphate; that span reads GPL. Aspartate 160 contacts Mg(2+). Thiamine diphosphate is bound by residues glycine 161 and asparagine 190. Mg(2+) is bound by residues asparagine 190 and valine 192. Positions 267, 359, and 386 each coordinate substrate. Histidine 267 serves as a coordination point for thiamine diphosphate. The active-site Proton donor is glutamate 413. Phenylalanine 439 is a thiamine diphosphate binding site. Substrate is bound by residues histidine 463, aspartate 471, and arginine 522.

The protein belongs to the transketolase family. As to quaternary structure, homodimer. Mg(2+) is required as a cofactor. Ca(2+) serves as cofactor. Requires Mn(2+) as cofactor. The cofactor is Co(2+). It depends on thiamine diphosphate as a cofactor.

It catalyses the reaction D-sedoheptulose 7-phosphate + D-glyceraldehyde 3-phosphate = aldehydo-D-ribose 5-phosphate + D-xylulose 5-phosphate. In terms of biological role, catalyzes the transfer of a two-carbon ketol group from a ketose donor to an aldose acceptor, via a covalent intermediate with the cofactor thiamine pyrophosphate. The chain is Transketolase (tkt-1) from Dictyostelium discoideum (Social amoeba).